A 201-amino-acid polypeptide reads, in one-letter code: Orotate phosphoribosyltransferase (201 aa).

Residue 113–121 coordinates 5-phospho-alpha-D-ribose 1-diphosphate; it reads EDIITTGKS. Threonine 117 and arginine 145 together coordinate orotate.

It belongs to the purine/pyrimidine phosphoribosyltransferase family. PyrE subfamily. As to quaternary structure, homodimer. Requires Mg(2+) as cofactor.

It catalyses the reaction orotidine 5'-phosphate + diphosphate = orotate + 5-phospho-alpha-D-ribose 1-diphosphate. The protein operates within pyrimidine metabolism; UMP biosynthesis via de novo pathway; UMP from orotate: step 1/2. Its function is as follows. Catalyzes the transfer of a ribosyl phosphate group from 5-phosphoribose 1-diphosphate to orotate, leading to the formation of orotidine monophosphate (OMP). The sequence is that of Orotate phosphoribosyltransferase from Helicobacter pylori (strain P12).